The sequence spans 727 residues: Synaptic vesicle glycoprotein 2C (727 aa).

The interval methionine 1–aspartate 57 is interaction with SYT1. Over methionine 1–leucine 154 the chain is Cytoplasmic. Disordered regions lie at residues lysine 24–glutamate 84 and valine 109–arginine 128. Residues serine 75 and serine 76 each carry the phosphoserine modification. Phosphothreonine is present on threonine 79. Residues lysine 113 to arginine 128 show a composition bias toward basic and acidic residues. A helical membrane pass occupies residues phenylalanine 155–valine 175. The Extracellular segment spans residues leucine 176–glycine 191. The helical transmembrane segment at tryptophan 192–alanine 212 threads the bilayer. Over aspartate 213–serine 226 the chain is Cytoplasmic. The helical transmembrane segment at valine 227–cysteine 247 threads the bilayer. Residue arginine 248 is a topological domain, extracellular. The chain crosses the membrane as a helical span at residues leucine 249 to valine 269. At leucine 270 to serine 280 the chain is on the cytoplasmic side. The chain crosses the membrane as a helical span at residues tryptophan 281–isoleucine 301. At proline 302–arginine 320 the chain is on the extracellular side. A helical transmembrane segment spans residues valine 321–proline 341. At glutamate 342 to threonine 437 the chain is on the cytoplasmic side. A helical transmembrane segment spans residues isoleucine 438 to isoleucine 458. The Extracellular segment spans residues lysine 459–serine 578. Tyrosine 466 bears the Phosphotyrosine mark. Asparagine 480, asparagine 484, asparagine 534, asparagine 559, and asparagine 565 each carry an N-linked (GlcNAc...) asparagine glycan. A (Microbial infection) C.botulinum neurotoxin type A-binding region spans residues serine 519–phenylalanine 563. A helical membrane pass occupies residues alanine 579–valine 599. At serine 600–arginine 609 the chain is on the cytoplasmic side. Residues leucine 610–glycine 630 form a helical membrane-spanning segment. Residues threonine 631 to methionine 636 lie on the Extracellular side of the membrane. The chain crosses the membrane as a helical span at residues isoleucine 637–valine 657. At threonine 658–threonine 669 the chain is on the cytoplasmic side. Residues glycine 670 to glycine 690 traverse the membrane as a helical segment. Residues serine 691–serine 698 are Extracellular-facing. Residues isoleucine 699–proline 719 form a helical membrane-spanning segment. Topologically, residues aspartate 720 to methionine 727 are cytoplasmic.

It belongs to the major facilitator superfamily. As to quaternary structure, interacts with SYT1 in a calcium-dependent manner. In terms of assembly, (Microbial infection) Interacts with C.botulinum neurotoxin type A1 and type A2 (BoNT/A, botA). Interaction is improved by glycosylation of SV2. In terms of processing, N-glycosylated. Upon expression in a kidney cell line the most abundant glycan on Asn-534 is GlcNAc(3)Hex(5), while on Asn-559 and Asn-565 the most abundant glycan is GlcNAc2Fuc1Man3GlcNAc3Gal3. Both Asn-559 and Asn-565 have a high degree of glycan heterogeneity.

The protein resides in the cytoplasmic vesicle. Its subcellular location is the secretory vesicle. It is found in the synaptic vesicle membrane. Functionally, plays a role in the control of regulated secretion in neural and endocrine cells, enhancing selectively low-frequency neurotransmission. Positively regulates vesicle fusion by maintaining the readily releasable pool of secretory vesicles. In terms of biological role, (Microbial infection) Receptor for C.botulinum neurotoxin type A (BoNT/A, botA); the toxin probably binds via extracellular loop 4. Recognition by BoNT/A relies on both protein-protein and protein-N-glycosylation; glycosylation of Asn-559 increases its affinity for BoNT/A. Also serves as a receptor for the closely related C.botulinum neurotoxin type A2; glycosylation is not essential but enhances the interaction. Its function is as follows. (Microbial infection) Possible receptor for C.botulinum neurotoxin type D (BoNT/D, botD); note that type D does not usually infect humans. This Homo sapiens (Human) protein is Synaptic vesicle glycoprotein 2C (SV2C).